The primary structure comprises 621 residues: tRNA uridine 5-carboxymethylaminomethyl modification enzyme MnmG (621 aa).

Residue 9 to 14 (GGGHAG) coordinates FAD. An NAD(+)-binding site is contributed by 268 to 282 (GPRYCPSIEDKINRF).

It belongs to the MnmG family. As to quaternary structure, homodimer. Heterotetramer of two MnmE and two MnmG subunits. Requires FAD as cofactor.

The protein localises to the cytoplasm. In terms of biological role, NAD-binding protein involved in the addition of a carboxymethylaminomethyl (cmnm) group at the wobble position (U34) of certain tRNAs, forming tRNA-cmnm(5)s(2)U34. The polypeptide is tRNA uridine 5-carboxymethylaminomethyl modification enzyme MnmG (Campylobacter fetus subsp. fetus (strain 82-40)).